We begin with the raw amino-acid sequence, 327 residues long: Beta-ketoacyl-[acyl-carrier-protein] synthase III 2 (327 aa).

Residues Cys114 and His251 contribute to the active site. Residues 252-256 (SANLR) are ACP-binding. The active site involves Asn281.

This sequence belongs to the thiolase-like superfamily. FabH family. As to quaternary structure, homodimer.

Its subcellular location is the cytoplasm. The catalysed reaction is malonyl-[ACP] + acetyl-CoA + H(+) = 3-oxobutanoyl-[ACP] + CO2 + CoA. The protein operates within lipid metabolism; fatty acid biosynthesis. Catalyzes the condensation reaction of fatty acid synthesis by the addition to an acyl acceptor of two carbons from malonyl-ACP. Catalyzes the first condensation reaction which initiates fatty acid synthesis and may therefore play a role in governing the total rate of fatty acid production. Possesses both acetoacetyl-ACP synthase and acetyl transacylase activities. Its substrate specificity determines the biosynthesis of branched-chain and/or straight-chain of fatty acids. The sequence is that of Beta-ketoacyl-[acyl-carrier-protein] synthase III 2 from Bacillus anthracis.